Here is a 740-residue protein sequence, read N- to C-terminus: Phosphoribosylformylglycinamidine synthase subunit PurL (740 aa).

H53 is a catalytic residue. Residues Y56 and K95 each coordinate ATP. Position 97 (E97) interacts with Mg(2+). Substrate-binding positions include 98 to 101 (SHNH) and R120. H99 functions as the Proton acceptor in the catalytic mechanism. A Mg(2+)-binding site is contributed by D121. Q244 serves as a coordination point for substrate. D272 lines the Mg(2+) pocket. 316–318 (ESQ) lines the substrate pocket. ATP contacts are provided by D497 and G534. N535 provides a ligand contact to Mg(2+). S537 lines the substrate pocket.

It belongs to the FGAMS family. As to quaternary structure, monomer. Part of the FGAM synthase complex composed of 1 PurL, 1 PurQ and 2 PurS subunits.

It localises to the cytoplasm. It carries out the reaction N(2)-formyl-N(1)-(5-phospho-beta-D-ribosyl)glycinamide + L-glutamine + ATP + H2O = 2-formamido-N(1)-(5-O-phospho-beta-D-ribosyl)acetamidine + L-glutamate + ADP + phosphate + H(+). It functions in the pathway purine metabolism; IMP biosynthesis via de novo pathway; 5-amino-1-(5-phospho-D-ribosyl)imidazole from N(2)-formyl-N(1)-(5-phospho-D-ribosyl)glycinamide: step 1/2. In terms of biological role, part of the phosphoribosylformylglycinamidine synthase complex involved in the purines biosynthetic pathway. Catalyzes the ATP-dependent conversion of formylglycinamide ribonucleotide (FGAR) and glutamine to yield formylglycinamidine ribonucleotide (FGAM) and glutamate. The FGAM synthase complex is composed of three subunits. PurQ produces an ammonia molecule by converting glutamine to glutamate. PurL transfers the ammonia molecule to FGAR to form FGAM in an ATP-dependent manner. PurS interacts with PurQ and PurL and is thought to assist in the transfer of the ammonia molecule from PurQ to PurL. The protein is Phosphoribosylformylglycinamidine synthase subunit PurL of Rhodospirillum rubrum (strain ATCC 11170 / ATH 1.1.1 / DSM 467 / LMG 4362 / NCIMB 8255 / S1).